The following is a 355-amino-acid chain: MRRQLRSRRAPALPYGYRYRLDDQDEVNQNYLADEEEEAEEEARVMVVPDLEEEEEEEEEKEEEEKEEEDSHSQETDSAWWRKLQIVNEYLWDPEKRTSLARTGQSWSLILVIYFFFYASLAAVITLCMYTLFLTISPYMPTFTERVKPPGVMIRPFAHSLNFNFNVSEPDTWQHYVISLNGFLQGYNDSLQEEMNVDCPPGQYFIQDGDEDEDKKACQFKRSFLKNCSGLEDPTFGYSTGQPCILLKMNRIVGFRPERGDPVKVSCKVQRGDENDIRSINYYPESASFDLRYYPYYGKLTHVNYTSPLVAMHFTDVVKNQAVPVQCQLKGKGIINDVINDRFVGRVIFTLNIET.

Residues 1–108 lie on the Nuclear side of the membrane; the sequence is MRRQLRSRRA…SLARTGQSWS (108 aa). The disordered stretch occupies residues 33–77; sequence ADEEEEAEEEARVMVVPDLEEEEEEEEEKEEEEKEEEDSHSQETD. Over residues 50 to 68 the composition is skewed to acidic residues; it reads DLEEEEEEEEEKEEEEKEE. A helical; Signal-anchor for type II membrane protein membrane pass occupies residues 109–129; sequence LILVIYFFFYASLAAVITLCM. Over 130–355 the chain is Perinuclear space; it reads YTLFLTISPY…RVIFTLNIET (226 aa).

Belongs to the X(+)/potassium ATPases subunit beta family. Associates with a SMAD7-transcriptional complex. Interacts with SNW1 and TOR1AIP1. Does not associate with known Na,K-ATPase alpha-subunits.

It localises to the nucleus inner membrane. In terms of biological role, may act as a transcriptional coregulator during muscle development through its interaction with SNW1. Has lost its ancestral function as a Na,K-ATPase beta-subunit. This chain is Protein ATP1B4 (ATP1B4), found in Bos taurus (Bovine).